The primary structure comprises 864 residues: Leucine--tRNA ligase (864 aa).

Residues 42 to 52 carry the 'HIGH' region motif; the sequence is PYPSGKLHMGH. The short motif at 624-628 is the 'KMSKS' region element; it reads KMSKS. Lys627 lines the ATP pocket.

This sequence belongs to the class-I aminoacyl-tRNA synthetase family.

The protein localises to the cytoplasm. It catalyses the reaction tRNA(Leu) + L-leucine + ATP = L-leucyl-tRNA(Leu) + AMP + diphosphate. In Paraburkholderia phymatum (strain DSM 17167 / CIP 108236 / LMG 21445 / STM815) (Burkholderia phymatum), this protein is Leucine--tRNA ligase.